A 190-amino-acid chain; its full sequence is Adenylate kinase (190 aa).

Residue 11 to 16 (GAGKGT) coordinates ATP. Residues 31–60 (STGDIFRFNIKNETELGKLAKTFMDKGDLV) are NMP. AMP is bound by residues Thr32, Arg37, 58-60 (DLV), 86-89 (GFPR), and Gln93. Positions 127-137 (ERGKTSGRVDD) are LID. Residue Arg128 participates in ATP binding. Positions 134 and 146 each coordinate AMP. ATP is bound at residue Gly174.

Belongs to the adenylate kinase family. Monomer.

The protein localises to the cytoplasm. It catalyses the reaction AMP + ATP = 2 ADP. It functions in the pathway purine metabolism; AMP biosynthesis via salvage pathway; AMP from ADP: step 1/1. Functionally, catalyzes the reversible transfer of the terminal phosphate group between ATP and AMP. Plays an important role in cellular energy homeostasis and in adenine nucleotide metabolism. This chain is Adenylate kinase, found in Flavobacterium psychrophilum (strain ATCC 49511 / DSM 21280 / CIP 103535 / JIP02/86).